A 66-amino-acid chain; its full sequence is Phylloseptin-S1 (66 aa).

Positions 1–22 (MAFLKKSLFLVLFLGLVSLSIC) are cleaved as a signal peptide. The propeptide occupies 23–46 (EEEKRETEEEEHDQEEDDKSEEKR). A disordered region spans residues 25-44 (EKRETEEEEHDQEEDDKSEE). Acidic residues predominate over residues 30–41 (EEEEHDQEEDDK). Residue F65 is modified to Phenylalanine amide.

Expressed by the skin glands.

It is found in the secreted. Its subcellular location is the target cell membrane. In terms of biological role, antimicrobial peptide with high activity against Gram-positive bacteria, low activity against Gram-negative bacteria, and moderate activity against fungi. Acts on bacterial biofilms (S.aureus) with the same potency than on bacteria. Acts by causing bacterial membrane disruption inducing leakage of the intracellular content followed by cell death. It adopts an alpha-helical amphipathic structure in membrane environments. Also shows highly potent antiparasitic activity against Leishmania species. Shows low hemolytic activity on horse and human erythrocytes (LC(50)=39 uM). Is also active on human monocytes (IC(50)=23 uM). The polypeptide is Phylloseptin-S1 (Phyllomedusa sauvagei (Sauvage's leaf frog)).